The sequence spans 394 residues: 1-deoxy-D-xylulose 5-phosphate reductoisomerase (394 aa).

8 residues coordinate NADPH: threonine 10, glycine 11, serine 12, isoleucine 13, glycine 38, arginine 39, asparagine 40, and asparagine 123. Position 124 (lysine 124) interacts with 1-deoxy-D-xylulose 5-phosphate. Position 125 (glutamate 125) interacts with NADPH. Aspartate 149 contacts Mn(2+). 1-deoxy-D-xylulose 5-phosphate contacts are provided by serine 150, glutamate 151, serine 175, and histidine 198. Glutamate 151 contributes to the Mn(2+) binding site. Residue glycine 204 coordinates NADPH. Serine 211, asparagine 216, lysine 217, and glutamate 220 together coordinate 1-deoxy-D-xylulose 5-phosphate. Residue glutamate 220 participates in Mn(2+) binding.

It belongs to the DXR family. The cofactor is Mg(2+). Requires Mn(2+) as cofactor.

It catalyses the reaction 2-C-methyl-D-erythritol 4-phosphate + NADP(+) = 1-deoxy-D-xylulose 5-phosphate + NADPH + H(+). The protein operates within isoprenoid biosynthesis; isopentenyl diphosphate biosynthesis via DXP pathway; isopentenyl diphosphate from 1-deoxy-D-xylulose 5-phosphate: step 1/6. Its function is as follows. Catalyzes the NADPH-dependent rearrangement and reduction of 1-deoxy-D-xylulose-5-phosphate (DXP) to 2-C-methyl-D-erythritol 4-phosphate (MEP). The protein is 1-deoxy-D-xylulose 5-phosphate reductoisomerase of Cereibacter sphaeroides (strain ATCC 17025 / ATH 2.4.3) (Rhodobacter sphaeroides).